A 378-amino-acid chain; its full sequence is Putative F-box protein At5g51000 (378 aa).

The F-box domain maps to 1–47 (MSTMSDLFPDLVEEILSRVPITSLKAVKLTCKQWNDLSKDSSFTKNH).

The polypeptide is Putative F-box protein At5g51000 (Arabidopsis thaliana (Mouse-ear cress)).